Reading from the N-terminus, the 213-residue chain is Holliday junction resolvase RecU (213 aa).

Mg(2+) is bound by residues Thr-99, Asp-101, Glu-114, and Gln-133.

It belongs to the RecU family. Mg(2+) serves as cofactor.

It is found in the cytoplasm. It catalyses the reaction Endonucleolytic cleavage at a junction such as a reciprocal single-stranded crossover between two homologous DNA duplexes (Holliday junction).. Its function is as follows. Endonuclease that resolves Holliday junction intermediates in genetic recombination. Cleaves mobile four-strand junctions by introducing symmetrical nicks in paired strands. Promotes annealing of linear ssDNA with homologous dsDNA. Required for DNA repair, homologous recombination and chromosome segregation. This Lactococcus lactis subsp. lactis (strain IL1403) (Streptococcus lactis) protein is Holliday junction resolvase RecU.